Reading from the N-terminus, the 345-residue chain is Glycerol-3-phosphate dehydrogenase [NAD(P)+] (345 aa).

Serine 11, tryptophan 12, histidine 32, arginine 33, and lysine 106 together coordinate NADPH. Residues lysine 106, glycine 137, and serine 139 each contribute to the sn-glycerol 3-phosphate site. Alanine 141 is a binding site for NADPH. The sn-glycerol 3-phosphate site is built by lysine 192, aspartate 245, serine 255, arginine 256, and asparagine 257. The active-site Proton acceptor is lysine 192. An NADPH-binding site is contributed by arginine 256. NADPH-binding residues include valine 280 and glutamate 282.

It belongs to the NAD-dependent glycerol-3-phosphate dehydrogenase family.

Its subcellular location is the cytoplasm. It catalyses the reaction sn-glycerol 3-phosphate + NAD(+) = dihydroxyacetone phosphate + NADH + H(+). It carries out the reaction sn-glycerol 3-phosphate + NADP(+) = dihydroxyacetone phosphate + NADPH + H(+). It participates in membrane lipid metabolism; glycerophospholipid metabolism. With respect to regulation, does not seem to be inhibited by sn-glycerol 3-phosphate, in contrast to the E.coli homolog enzyme which is very sensitive to allosteric inhibition by G3P. Functionally, catalyzes the reduction of the glycolytic intermediate dihydroxyacetone phosphate (DHAP) to sn-glycerol 3-phosphate (G3P), the key precursor for phospholipid synthesis. The sequence is that of Glycerol-3-phosphate dehydrogenase [NAD(P)+] from Bacillus subtilis (strain 168).